A 646-amino-acid polypeptide reads, in one-letter code: Lipoteichoic acid synthase (646 aa).

The Cytoplasmic portion of the chain corresponds to 1-7 (MSLPKKK). The helical transmembrane segment at 8 to 28 (IGIFAFFLLTVFTITLKTYFS) threads the bilayer. The Extracellular segment spans residues 29–43 (YYVDFSLGVKGLVQN). A helical transmembrane segment spans residues 44–64 (LILIMNPYSLIALVLSVFLFF). Over 65–68 (KGKK) the chain is Cytoplasmic. A helical transmembrane segment spans residues 69 to 89 (AFWFIFIGGFLLTFLLYANVV). Over 90–119 (YFRFFSDFLTFSTLNQAGNVESMGGAVSAS) the chain is Extracellular. The helical transmembrane segment at 120–140 (FKWYDFVYFIDTIIYLAILIF) threads the bilayer. Over 141 to 153 (KRKWLDNRAFSKK) the chain is Cytoplasmic. Residues 154–174 (FVPVVMATSVALFFLNLAFAE) form a helical membrane-spanning segment. Residues 175–646 (TDRPELLTRT…KSGPKGNEKK (472 aa)) are Extracellular-facing. The Mn(2+) site is built by Glu255 and Thr300. Thr300 is a catalytic residue. His416 is a substrate binding site. The Mn(2+) site is built by Asp475 and His476.

Belongs to the LTA synthase family. Proteolytically cleaved.

The protein localises to the cell membrane. It localises to the secreted. It functions in the pathway cell wall biogenesis; lipoteichoic acid biosynthesis. Its function is as follows. Catalyzes the polymerization of lipoteichoic acid (LTA) polyglycerol phosphate, a reaction that presumably uses phosphatidylglycerol (PG) as substrate. Is required for staphylococcal growth and cell division process. This Staphylococcus epidermidis (strain ATCC 12228 / FDA PCI 1200) protein is Lipoteichoic acid synthase (ltaS).